The chain runs to 300 residues: NAD kinase (300 aa).

D75 acts as the Proton acceptor in catalysis. NAD(+)-binding positions include 75 to 76 (DG), 149 to 150 (ND), R177, D179, 190 to 195 (TAYALS), A214, and Q248.

Belongs to the NAD kinase family. The cofactor is a divalent metal cation.

The protein resides in the cytoplasm. It catalyses the reaction NAD(+) + ATP = ADP + NADP(+) + H(+). Functionally, involved in the regulation of the intracellular balance of NAD and NADP, and is a key enzyme in the biosynthesis of NADP. Catalyzes specifically the phosphorylation on 2'-hydroxyl of the adenosine moiety of NAD to yield NADP. The chain is NAD kinase from Burkholderia mallei (strain SAVP1).